The chain runs to 118 residues: Cysteine-rich and transmembrane domain-containing protein 1 (118 aa).

Low complexity-rich tracts occupy residues 1–54 (MNYE…QGYP) and 64–74 (YTAQPGYQGYP). Residues 1–82 (MNYEQPPAYT…YPQPGPPTNT (82 aa)) are disordered. The helical transmembrane segment at 95–112 (SGEQACLATCWAALCCCC) threads the bilayer.

Belongs to the CYSTM1 family.

Its subcellular location is the membrane. This is Cysteine-rich and transmembrane domain-containing protein 1 (cystm1) from Danio rerio (Zebrafish).